We begin with the raw amino-acid sequence, 395 residues long: Phosphopentomutase (395 aa).

Asp-14, Asp-289, His-294, Asp-330, His-331, and His-342 together coordinate Mn(2+).

The protein belongs to the phosphopentomutase family. Mn(2+) serves as cofactor.

The protein resides in the cytoplasm. It catalyses the reaction 2-deoxy-alpha-D-ribose 1-phosphate = 2-deoxy-D-ribose 5-phosphate. The catalysed reaction is alpha-D-ribose 1-phosphate = D-ribose 5-phosphate. Its pathway is carbohydrate degradation; 2-deoxy-D-ribose 1-phosphate degradation; D-glyceraldehyde 3-phosphate and acetaldehyde from 2-deoxy-alpha-D-ribose 1-phosphate: step 1/2. Isomerase that catalyzes the conversion of deoxy-ribose 1-phosphate (dRib-1-P) and ribose 1-phosphate (Rib-1-P) to deoxy-ribose 5-phosphate (dRib-5-P) and ribose 5-phosphate (Rib-5-P), respectively. The chain is Phosphopentomutase from Mycoplasmopsis pulmonis (strain UAB CTIP) (Mycoplasma pulmonis).